Here is a 292-residue protein sequence, read N- to C-terminus: Acetylglutamate kinase (292 aa).

Substrate is bound by residues 64–65 (GG), R86, and N190.

Belongs to the acetylglutamate kinase family. ArgB subfamily.

The protein localises to the cytoplasm. It catalyses the reaction N-acetyl-L-glutamate + ATP = N-acetyl-L-glutamyl 5-phosphate + ADP. The protein operates within amino-acid biosynthesis; L-arginine biosynthesis; N(2)-acetyl-L-ornithine from L-glutamate: step 2/4. Its function is as follows. Catalyzes the ATP-dependent phosphorylation of N-acetyl-L-glutamate. In Geotalea daltonii (strain DSM 22248 / JCM 15807 / FRC-32) (Geobacter daltonii), this protein is Acetylglutamate kinase.